The following is a 1067-amino-acid chain: DNA-directed RNA polymerase subunit beta (1067 aa).

This sequence belongs to the RNA polymerase beta chain family. As to quaternary structure, in plastids the minimal PEP RNA polymerase catalytic core is composed of four subunits: alpha, beta, beta', and beta''. When a (nuclear-encoded) sigma factor is associated with the core the holoenzyme is formed, which can initiate transcription.

It is found in the plastid. It localises to the chloroplast. The catalysed reaction is RNA(n) + a ribonucleoside 5'-triphosphate = RNA(n+1) + diphosphate. DNA-dependent RNA polymerase catalyzes the transcription of DNA into RNA using the four ribonucleoside triphosphates as substrates. This chain is DNA-directed RNA polymerase subunit beta, found in Ipomoea purpurea (Common morning glory).